We begin with the raw amino-acid sequence, 338 residues long: Tetraacyldisaccharide 4'-kinase (338 aa).

51-58 (HLGGAGKT) provides a ligand contact to ATP.

This sequence belongs to the LpxK family.

It carries out the reaction a lipid A disaccharide + ATP = a lipid IVA + ADP + H(+). Its pathway is glycolipid biosynthesis; lipid IV(A) biosynthesis; lipid IV(A) from (3R)-3-hydroxytetradecanoyl-[acyl-carrier-protein] and UDP-N-acetyl-alpha-D-glucosamine: step 6/6. Functionally, transfers the gamma-phosphate of ATP to the 4'-position of a tetraacyldisaccharide 1-phosphate intermediate (termed DS-1-P) to form tetraacyldisaccharide 1,4'-bis-phosphate (lipid IVA). This chain is Tetraacyldisaccharide 4'-kinase, found in Rhodopseudomonas palustris (strain HaA2).